The sequence spans 359 residues: Glutamine synthetase (359 aa).

Residues 28-107 enclose the GS beta-grasp domain; the sequence is VMAEYIWIDG…VLAACYTADG (80 aa). Residues 114–359 enclose the GS catalytic domain; sequence HRDACAKLLE…GIITETMFEH (246 aa). Residue Ser-273 is modified to Phosphoserine. Residue Thr-303 is modified to Phosphothreonine. At Ser-305 the chain carries Phosphoserine.

The protein belongs to the glutamine synthetase family. As to quaternary structure, homooctamer.

It is found in the cytoplasm. It carries out the reaction L-glutamate + NH4(+) + ATP = L-glutamine + ADP + phosphate + H(+). This chain is Glutamine synthetase (gln1), found in Schizosaccharomyces pombe (strain 972 / ATCC 24843) (Fission yeast).